We begin with the raw amino-acid sequence, 344 residues long: Dihydroorotate dehydrogenase (quinone) (344 aa).

Residues 61–65 and Thr85 each bind FMN; that span reads AGLDK. Lys65 lines the substrate pocket. 110-114 lines the substrate pocket; the sequence is NRMGF. 2 residues coordinate FMN: Asn138 and Asn171. Residue Asn171 coordinates substrate. The active-site Nucleophile is the Ser174. Asn176 serves as a coordination point for substrate. The FMN site is built by Lys216 and Thr244. 245–246 contributes to the substrate binding site; the sequence is NT. Residues Gly267, Gly296, and 317-318 each bind FMN; that span reads YS.

The protein belongs to the dihydroorotate dehydrogenase family. Type 2 subfamily. Monomer. Requires FMN as cofactor.

The protein localises to the cell membrane. The catalysed reaction is (S)-dihydroorotate + a quinone = orotate + a quinol. It functions in the pathway pyrimidine metabolism; UMP biosynthesis via de novo pathway; orotate from (S)-dihydroorotate (quinone route): step 1/1. Catalyzes the conversion of dihydroorotate to orotate with quinone as electron acceptor. This is Dihydroorotate dehydrogenase (quinone) from Psychrobacter sp. (strain PRwf-1).